The chain runs to 547 residues: Probable bifunctional tRNA threonylcarbamoyladenosine biosynthesis protein (547 aa).

The segment at 1 to 329 (MKKTFILGIE…FRTDDVKVTW (329 aa)) is kae1. His113, His117, and Tyr134 together coordinate Fe cation. L-threonylcarbamoyladenylate is bound by residues 134–138 (YVSGA), Asp166, Gly179, Glu183, and Asn262. Residue Asp290 coordinates Fe cation. One can recognise a Protein kinase domain in the interval 340–547 (EISPETFFRM…EEIKKRARYA (208 aa)). ATP is bound by residues 355–363 (LDNGAEAVV) and Lys377. The active-site Proton acceptor; for kinase activity is the Asp464.

It in the N-terminal section; belongs to the KAE1 / TsaD family. In the C-terminal section; belongs to the protein kinase superfamily. Tyr protein kinase family. BUD32 subfamily. Component of the KEOPS complex that consists of Kae1, Bud32, Cgi121 and Pcc1; the whole complex dimerizes. Fe(2+) serves as cofactor.

It localises to the cytoplasm. It carries out the reaction L-seryl-[protein] + ATP = O-phospho-L-seryl-[protein] + ADP + H(+). It catalyses the reaction L-threonyl-[protein] + ATP = O-phospho-L-threonyl-[protein] + ADP + H(+). The catalysed reaction is L-threonylcarbamoyladenylate + adenosine(37) in tRNA = N(6)-L-threonylcarbamoyladenosine(37) in tRNA + AMP + H(+). Its function is as follows. Required for the formation of a threonylcarbamoyl group on adenosine at position 37 (t(6)A37) in tRNAs that read codons beginning with adenine. Is a component of the KEOPS complex that is probably involved in the transfer of the threonylcarbamoyl moiety of threonylcarbamoyl-AMP (TC-AMP) to the N6 group of A37. The Kae1 domain likely plays a direct catalytic role in this reaction. The Bud32 domain probably displays kinase activity that regulates Kae1 function. In Methanosarcina mazei (strain ATCC BAA-159 / DSM 3647 / Goe1 / Go1 / JCM 11833 / OCM 88) (Methanosarcina frisia), this protein is Probable bifunctional tRNA threonylcarbamoyladenosine biosynthesis protein.